The following is a 377-amino-acid chain: Anhydro-N-acetylmuramic acid kinase (377 aa).

Residue 19 to 26 participates in ATP binding; that stretch reads GTSLDGVD.

The protein belongs to the anhydro-N-acetylmuramic acid kinase family.

It carries out the reaction 1,6-anhydro-N-acetyl-beta-muramate + ATP + H2O = N-acetyl-D-muramate 6-phosphate + ADP + H(+). The protein operates within amino-sugar metabolism; 1,6-anhydro-N-acetylmuramate degradation. Its pathway is cell wall biogenesis; peptidoglycan recycling. In terms of biological role, catalyzes the specific phosphorylation of 1,6-anhydro-N-acetylmuramic acid (anhMurNAc) with the simultaneous cleavage of the 1,6-anhydro ring, generating MurNAc-6-P. Is required for the utilization of anhMurNAc either imported from the medium or derived from its own cell wall murein, and thus plays a role in cell wall recycling. This chain is Anhydro-N-acetylmuramic acid kinase, found in Roseobacter denitrificans (strain ATCC 33942 / OCh 114) (Erythrobacter sp. (strain OCh 114)).